Consider the following 297-residue polypeptide: Retroviral cyclin (297 aa).

A Cyclin N-terminal domain is found at 21–113 (PVYWKELLNW…KPSLLLTETM (93 aa)). Positions 21-113 (PVYWKELLNW…KPSLLLTETM (93 aa)) are transcription activation domain. Positions 222-270 (QINLDFAEAEQREAAERRALLEREREQQLQEARERLDDVMAVLEAEVAI) form a coiled coil.

The protein belongs to the cyclin family. As to quaternary structure, interacts (via transcription activation domain) with host TAF9 in vitro. Interacts with host CDK3 and CDK8.

Its subcellular location is the host nucleus. Functionally, transforming protein which induces the development of dermal sarcomas. Induces positive and negative regulation of transcription from host and viral promoters by interacting with various cellular factors involved in protein transcription regulation. This Sander vitreus (Walleye) protein is Retroviral cyclin (orfA).